A 63-amino-acid chain; its full sequence is Translational regulator CsrA (63 aa).

Belongs to the CsrA/RsmA family. Homodimer; the beta-strands of each monomer intercalate to form a hydrophobic core, while the alpha-helices form wings that extend away from the core.

The protein resides in the cytoplasm. Its function is as follows. A key translational regulator that binds mRNA to regulate translation initiation and/or mRNA stability. Mediates global changes in gene expression, shifting from rapid growth to stress survival by linking envelope stress, the stringent response and the catabolite repression systems. Usually binds in the 5'-UTR; binding at or near the Shine-Dalgarno sequence prevents ribosome-binding, repressing translation, binding elsewhere in the 5'-UTR can activate translation and/or stabilize the mRNA. Its function is antagonized by small RNA(s). The protein is Translational regulator CsrA of Alteromonas mediterranea (strain DSM 17117 / CIP 110805 / LMG 28347 / Deep ecotype).